The following is a 162-amino-acid chain: Small ribosomal subunit protein bS16 (162 aa).

The tract at residues 113–162 is disordered; the sequence is ADGGPTTEATKPKKKSPAKKAAKAAEPAPQPEQPDTPALGGEQAELTAES. Positions 124–134 are enriched in basic residues; the sequence is PKKKSPAKKAA.

The protein belongs to the bacterial ribosomal protein bS16 family.

This chain is Small ribosomal subunit protein bS16, found in Mycobacterium tuberculosis (strain ATCC 25177 / H37Ra).